An 81-amino-acid chain; its full sequence is ATP synthase subunit c, chloroplastic (81 aa).

The next 2 helical transmembrane spans lie at 3–23 (PIISAASVIAAGLAVGLASIG) and 57–77 (LAFMEALTIYGLVVALALLFA).

It belongs to the ATPase C chain family. As to quaternary structure, F-type ATPases have 2 components, F(1) - the catalytic core - and F(0) - the membrane proton channel. F(1) has five subunits: alpha(3), beta(3), gamma(1), delta(1), epsilon(1). F(0) has four main subunits: a(1), b(1), b'(1) and c(10-14). The alpha and beta chains form an alternating ring which encloses part of the gamma chain. F(1) is attached to F(0) by a central stalk formed by the gamma and epsilon chains, while a peripheral stalk is formed by the delta, b and b' chains.

It localises to the plastid. The protein resides in the chloroplast thylakoid membrane. F(1)F(0) ATP synthase produces ATP from ADP in the presence of a proton or sodium gradient. F-type ATPases consist of two structural domains, F(1) containing the extramembraneous catalytic core and F(0) containing the membrane proton channel, linked together by a central stalk and a peripheral stalk. During catalysis, ATP synthesis in the catalytic domain of F(1) is coupled via a rotary mechanism of the central stalk subunits to proton translocation. Its function is as follows. Key component of the F(0) channel; it plays a direct role in translocation across the membrane. A homomeric c-ring of between 10-14 subunits forms the central stalk rotor element with the F(1) delta and epsilon subunits. This is ATP synthase subunit c, chloroplastic from Cicer arietinum (Chickpea).